The primary structure comprises 200 residues: MLAFCRSSLKSKKYFIILLALAAIAGLGTHAAWSSNGLPRIDNKTLARLAQQHPVVVLFRHAERCDRSTNQCLSDKTGITVKGTQDARELGNAFSADIPDFNLYSSNTVRTIQSATWFSAGKKLTVDKRFLQCGNEIYSAIKDLQRKAPDKNIVIFTHNHCLTYIAKDKRDATFKPDYLDGLVMHVEKGKVYLDGEFVNH.

The signal sequence occupies residues 1–25; it reads MLAFCRSSLKSKKYFIILLALAAIA.

It belongs to the phosphoglycerate mutase family. Ais subfamily.

Its subcellular location is the periplasm. It participates in bacterial outer membrane biogenesis; lipopolysaccharide metabolism. Its function is as follows. Catalyzes the dephosphorylation of heptose(II) of the outer membrane lipopolysaccharide core. The sequence is that of Lipopolysaccharide core heptose(II)-phosphate phosphatase from Escherichia coli O6:K15:H31 (strain 536 / UPEC).